Here is a 180-residue protein sequence, read N- to C-terminus: UPF0227 protein YcfP (180 aa).

The protein belongs to the UPF0227 family.

The protein is UPF0227 protein YcfP of Escherichia coli O9:H4 (strain HS).